The following is a 285-amino-acid chain: MHPDNIHKDSYDFEALTESNPQLSEFVFQNKYGTQTINFANPEAVLQLNKALLKFHYQVENWSIPKQYLCPPIPGRADYIHYLNDLLSEENIQGEIRGIDIGVGANAIYPILASRIYDWKMLGTDIEEKSVAIAQANIETNPTIAKNIEIRHQEDRGSIFKGMIKKGEYYHFSICNPPFHASQEEANKATSRKFKNLGLEKGSALNFGGQANELWCNGGEALFIKRMIKESVLFKSQVGYFTSLVSKKENLPKIYKHLNKLKADFKTIEMGQGNKKSRIIAWKFD.

This sequence belongs to the methyltransferase superfamily. METTL16/RlmF family.

The protein resides in the cytoplasm. It carries out the reaction adenosine(1618) in 23S rRNA + S-adenosyl-L-methionine = N(6)-methyladenosine(1618) in 23S rRNA + S-adenosyl-L-homocysteine + H(+). In terms of biological role, specifically methylates the adenine in position 1618 of 23S rRNA. The polypeptide is Ribosomal RNA large subunit methyltransferase F (Christiangramia forsetii (strain DSM 17595 / CGMCC 1.15422 / KT0803) (Gramella forsetii)).